We begin with the raw amino-acid sequence, 530 residues long: T-complex protein 1 subunit zeta (530 aa).

Gly-38 is a binding site for ADP. Gly-38 lines the ATP pocket. Asp-89 lines the Mg(2+) pocket. Gly-90, Thr-91, Thr-92, Ser-93, Thr-157, Lys-158, and Ala-410 together coordinate ADP. ATP is bound by residues Gly-90, Thr-91, and Thr-92. ATP contacts are provided by Ala-410, Gly-411, Asp-495, and Lys-500. Asp-495 is a binding site for ADP.

As to quaternary structure, component of the chaperonin-containing T-complex (TRiC), a hexadecamer composed of two identical back-to-back stacked rings enclosing a protein folding chamber. Each ring is made up of eight different subunits: TCP1/CCT1, CCT2, CCT3, CCT4, CCT5, CCT6A/CCT6, CCT7, CCT8. Interacts with PACRG.

It is found in the cytoplasm. It catalyses the reaction ATP + H2O = ADP + phosphate + H(+). Its function is as follows. Component of the chaperonin-containing T-complex (TRiC), a molecular chaperone complex that assists the folding of actin, tubulin and other proteins upon ATP hydrolysis. This Gallus gallus (Chicken) protein is T-complex protein 1 subunit zeta.